Consider the following 234-residue polypeptide: Chalcone--flavanone isomerase 2 (234 aa).

Substrate contacts are provided by T50, N115, and S192.

Belongs to the chalcone isomerase family.

It carries out the reaction a chalcone = a flavanone.. It functions in the pathway secondary metabolite biosynthesis; flavonoid biosynthesis. Catalyzes the intramolecular cyclization of bicyclic chalcones into tricyclic (S)-flavanones. Responsible for the isomerization of 4,2',4',6'-tetrahydroxychalcone (also termed chalcone) into naringenin. This chain is Chalcone--flavanone isomerase 2 (CHI2), found in Vitis vinifera (Grape).